Here is a 134-residue protein sequence, read N- to C-terminus: Large ribosomal subunit protein uL16c (134 aa).

The interval 1–22 (MLSPKRTRFRKQHRGRMKGISH) is disordered.

Belongs to the universal ribosomal protein uL16 family. As to quaternary structure, part of the 50S ribosomal subunit.

The protein resides in the plastid. It localises to the chloroplast. The sequence is that of Large ribosomal subunit protein uL16c from Nicotiana tomentosiformis (Tobacco).